The following is a 165-amino-acid chain: UPF0303 protein Bphy_1660 (165 aa).

Belongs to the UPF0303 family.

The chain is UPF0303 protein Bphy_1660 from Paraburkholderia phymatum (strain DSM 17167 / CIP 108236 / LMG 21445 / STM815) (Burkholderia phymatum).